A 3432-amino-acid polypeptide reads, in one-letter code: Genome polyprotein (3432 aa).

The tract at residues 2–15 (TKKPGGPGKNRAIN) is interaction with host EXOC1. At 2 to 109 (TKKPGGPGKN…RKQNKRGGNE (108 aa)) the chain is on the cytoplasmic side. Residues 37–72 (LLDGRGPVRFVLALITFFKFTALAPTKALLGRWKAV) are hydrophobic; homodimerization of capsid protein C. Positions 106-127 (GGNEGSIMWLASLAVVIACAGA) are cleaved as a propeptide — ER anchor for the capsid protein C, removed in mature form by serine protease NS3. The helical transmembrane segment at 110–130 (GSIMWLASLAVVIACAGAMKL) threads the bilayer. Topologically, residues 131-253 (SNFQGKLLMT…ATRYLMKTEN (123 aa)) are extracellular. Asn-142 carries N-linked (GlcNAc...) asparagine; by host glycosylation. Residues 254–274 (WIIRNPGYAFLAAVLGWMLGS) traverse the membrane as a helical segment. Over 275-279 (NNGQR) the chain is Cytoplasmic. A helical membrane pass occupies residues 280-294 (VVFTILLLLVAPAYS). Residues 295 to 746 (FNCLGMGNRD…QVFGGAFRTL (452 aa)) are Extracellular-facing. 6 disulfides stabilise this stretch: Cys-297-Cys-324, Cys-354-Cys-410, Cys-354-Cys-415, Cys-368-Cys-399, Cys-386-Cys-410, and Cys-386-Cys-415. Residues 392–405 (DRGWGNGCGLFGKG) are fusion peptide. Asn-448 carries N-linked (GlcNAc...) asparagine; by host glycosylation. 2 cysteine pairs are disulfide-bonded: Cys-484–Cys-581 and Cys-598–Cys-629. The helical transmembrane segment at 747–767 (FGGMSWITQGLMGALLLWMGV) threads the bilayer. The Cytoplasmic segment spans residues 768–773 (NARDRS). A helical membrane pass occupies residues 774-794 (IALAFLATGGVLVFLATNVHA). The Extracellular segment spans residues 795 to 1219 (DTGCAIDITR…AFAEANSGGD (425 aa)). Intrachain disulfides connect Cys-798/Cys-809, Cys-849/Cys-937, Cys-973/Cys-1017, Cys-1074/Cys-1123, Cys-1085/Cys-1106, and Cys-1107/Cys-1110. 2 N-linked (GlcNAc...) asparagine; by host glycosylation sites follow: Asn-924 and Asn-1001. Residues 1220-1240 (VLHLALIAVFKIQPAFLVMNM) form a helical membrane-spanning segment. At 1241–1250 (LSTRWTNQEN) the chain is on the cytoplasmic side. A helical transmembrane segment spans residues 1251–1271 (VVLVLGAAFFQLASVDLQIGV). His-1272 is a topological domain (lumenal). A helical membrane pass occupies residues 1273-1293 (GILNAAAIAWMIVRAITFPTT). Residues 1294–1309 (SSVTMPVLALLTPGMR) are Cytoplasmic-facing. Residues 1310-1330 (ALYLDTYRIILLVIGICSLLH) form a helical membrane-spanning segment. The Lumenal portion of the chain corresponds to 1331–1341 (ERKKTMAKKKG). The chain crosses the membrane as a helical span at residues 1342 to 1362 (AVLLGLALTSTGWFSPTTIAA). Topologically, residues 1363–1374 (GLMVCNPNKKRG) are cytoplasmic. Residues 1375 to 1395 (WPATEFLSAVGLMFAIVGGLA) traverse the membrane as a helical segment. The Lumenal segment spans residues 1396-1398 (ELD). A helical transmembrane segment spans residues 1399 to 1419 (IESMSIPFMLAGLMAVSYVVS). The Cytoplasmic segment spans residues 1420–1476 (GKATDMWLERAADISWEMDAAITGSSRRLDVKLDDDGDFHLIDDPGVPWKVWVLRMS). The segment at 1427-1466 (LERAADISWEMDAAITGSSRRLDVKLDDDGDFHLIDDPGV) is interacts with and activates NS3 protease. Positions 1477-1497 (CIGLAALTPWAIVPAAFGYWL) form an intramembrane region, helical. Over 1498-2173 (TLKTTKRGGV…RMALEELPDA (676 aa)) the chain is Cytoplasmic. A Peptidase S7 domain is found at 1505-1682 (GGVFWDTPSP…DRQEEPVPEA (178 aa)). Catalysis depends on charge relay system; for serine protease NS3 activity residues His-1555, Asp-1579, and Ser-1639. The region spanning 1685–1841 (PNMLRKRQMT…DSNAPIHDLQ (157 aa)) is the Helicase ATP-binding domain. Residues 1689-1692 (RKRQ) are important for RNA-binding. 1698 to 1705 (LHPGSGKT) provides a ligand contact to ATP. A DEAH box motif is present at residues 1789–1792 (DEAH). In terms of domain architecture, Helicase C-terminal spans 1852–2017 (GYEWITEYAG…GLVAQLYGPE (166 aa)). Lys-1893 carries the N6-acetyllysine; by host modification. Residues 1950 to 1972 (NPSPITSASAAQRRGRVGRNPNQ) are disordered. Residues 2168-2172 (EELPD) are regulates the ATPase activity of NS3 helicase. A helical membrane pass occupies residues 2174–2194 (LETITLIVAITVMTGGFFLLM). Over 2195–2199 (MQRKG) the chain is Lumenal. The segment at residues 2200–2220 (IGKMGLGALVLTLATFFLWAA) is an intramembrane region (helical). Glu-2221 is a topological domain (lumenal). The chain crosses the membrane as a helical span at residues 2222-2242 (VPGTKIAGTLLIALLLMVVLI). Residues 2243-2257 (PEPEKQRSQTDNQLA) lie on the Cytoplasmic side of the membrane. The chain crosses the membrane as a helical span at residues 2258–2278 (VFLICVLTVVGVVAANEYGML). Over 2279–2311 (EKTKADLKSMFGGKTQASGLTGLPSMALDLRPA) the chain is Lumenal. The segment at residues 2312–2332 (TAWALYGGSTVVLTPLLKHLI) is an intramembrane region (helical). Over 2333-2368 (TSEYVTTSLASINSQAGSLFVLPRGVPFTDLDLTVG) the chain is Lumenal. A helical transmembrane segment spans residues 2369-2389 (LVFLGCWGQITLTTFLTAMVL). Over 2390-2444 (ATLHYGYMLPGWQAEALRAAQRRTAAGIMKNAVVDGMVATDVPELERTTPLMQKK) the chain is Cytoplasmic. Residues 2445–2465 (VGQVLLIGVSVAAFLVNPNVT) traverse the membrane as a helical segment. The Lumenal portion of the chain corresponds to 2466-2469 (TVRE). The chain crosses the membrane as a helical span at residues 2470 to 2490 (AGVLVTAATLTLWDNGASAVW). The Cytoplasmic portion of the chain corresponds to 2491-3432 (NSTTATGLCH…DVLIQEDRVI (942 aa)). The mRNA cap 0-1 NS5-type MT domain occupies 2528–2793 (GRPGGRTLGE…DVNLGSGTRA (266 aa)). S-adenosyl-L-methionine is bound at residue Ser-2583. Residue Ser-2583 is modified to Phosphoserine. Lys-2588 (for 2'-O-MTase activity) is an active-site residue. Positions 2613, 2614, 2631, 2632, 2658, and 2659 each coordinate S-adenosyl-L-methionine. Residue Asp-2673 is the For 2'-O-MTase activity of the active site. Ile-2674 lines the S-adenosyl-L-methionine pocket. Catalysis depends on for 2'-O-MTase activity residues Lys-2709 and Glu-2745. Tyr-2747 contacts S-adenosyl-L-methionine. Residues Glu-2967, His-2971, Cys-2976, and Cys-2979 each contribute to the Zn(2+) site. The region spanning 3057-3209 (GKMYADDTAG…KPLDDRFATA (153 aa)) is the RdRp catalytic domain. Residues His-3244, Cys-3260, and Cys-3379 each contribute to the Zn(2+) site.

It in the N-terminal section; belongs to the class I-like SAM-binding methyltransferase superfamily. mRNA cap 0-1 NS5-type methyltransferase family. In terms of assembly, homodimer. Interacts (via N-terminus) with host EXOC1 (via C-terminus); this interaction results in EXOC1 degradation through the proteasome degradation pathway. As to quaternary structure, forms heterodimers with envelope protein E in the endoplasmic reticulum and Golgi. Homodimer; in the endoplasmic reticulum and Golgi. Interacts with protein prM. Interacts with non-structural protein 1. Interacts with host HSPA5. In terms of assembly, homodimer; Homohexamer when secreted. Interacts with envelope protein E. NS1 interacts with NS4B. Interacts with host complement protein CFH; this interaction leads to the degradation of C3. As to quaternary structure, interacts (via N-terminus) with serine protease NS3. Forms a heterodimer with serine protease NS3. May form homooligomers. In terms of assembly, forms a heterodimer with NS2B. Interacts with non-structural protein 2A (via N-terminus). Interacts with NS4B. Interacts with unphosphorylated RNA-directed RNA polymerase NS5; this interaction stimulates RNA-directed RNA polymerase NS5 guanylyltransferase activity. Interacts with host ILF2. As to quaternary structure, interacts with serine protease NS3. Homodimer. Interacts with host STAT2; this interaction inhibits the phosphorylation of the latter, and, when all viral proteins are present (polyprotein), targets STAT2 for degradation. Interacts with serine protease NS3. Mn(2+) serves as cofactor. The cofactor is Mg(2+). Post-translationally, specific enzymatic cleavages in vivo yield mature proteins. Cleavages in the lumen of endoplasmic reticulum are performed by host signal peptidase, whereas cleavages in the cytoplasmic side are performed by serine protease NS3. Signal cleavage at the 2K-4B site requires a prior NS3 protease-mediated cleavage at the 4A-2K site. Cleaved in post-Golgi vesicles by a host furin, releasing the mature small envelope protein M, and peptide pr. This cleavage is incomplete as up to 30% of viral particles still carry uncleaved prM. In terms of processing, N-glycosylated. Post-translationally, N-glycosylated. The excreted form is glycosylated and this is required for efficient secretion of the protein from infected cells. Acetylated by host KAT5. Acetylation modulates NS3 RNA-binding and unwinding activities and plays an important positive role for viral replication. In terms of processing, phosphorylated on serines residues. This phosphorylation may trigger NS5 nuclear localization.

Its subcellular location is the virion. The protein resides in the host nucleus. It is found in the host cytoplasm. The protein localises to the host perinuclear region. It localises to the secreted. Its subcellular location is the virion membrane. The protein resides in the host endoplasmic reticulum membrane. It is found in the host cell surface. The enzyme catalyses Selective hydrolysis of -Xaa-Xaa-|-Yaa- bonds in which each of the Xaa can be either Arg or Lys and Yaa can be either Ser or Ala.. The catalysed reaction is RNA(n) + a ribonucleoside 5'-triphosphate = RNA(n+1) + diphosphate. It catalyses the reaction a ribonucleoside 5'-triphosphate + H2O = a ribonucleoside 5'-diphosphate + phosphate + H(+). It carries out the reaction ATP + H2O = ADP + phosphate + H(+). The enzyme catalyses a 5'-end (5'-triphosphoguanosine)-ribonucleoside in mRNA + S-adenosyl-L-methionine = a 5'-end (N(7)-methyl 5'-triphosphoguanosine)-ribonucleoside in mRNA + S-adenosyl-L-homocysteine. The catalysed reaction is a 5'-end (N(7)-methyl 5'-triphosphoguanosine)-ribonucleoside in mRNA + S-adenosyl-L-methionine = a 5'-end (N(7)-methyl 5'-triphosphoguanosine)-(2'-O-methyl-ribonucleoside) in mRNA + S-adenosyl-L-homocysteine + H(+). Plays a role in virus budding by binding to the cell membrane and gathering the viral RNA into a nucleocapsid that forms the core of a mature virus particle. During virus entry, may induce genome penetration into the host cytoplasm after hemifusion induced by the surface proteins. Can migrate to the cell nucleus where it modulates host functions. Overcomes the anti-viral effects of host EXOC1 by sequestering and degrading the latter through the proteasome degradation pathway. Its function is as follows. Inhibits RNA silencing by interfering with host Dicer. In terms of biological role, prevents premature fusion activity of envelope proteins in trans-Golgi by binding to envelope protein E at pH6.0. After virion release in extracellular space, gets dissociated from E dimers. Functionally, acts as a chaperone for envelope protein E during intracellular virion assembly by masking and inactivating envelope protein E fusion peptide. prM is the only viral peptide matured by host furin in the trans-Golgi network probably to avoid catastrophic activation of the viral fusion activity in acidic Golgi compartment prior to virion release. prM-E cleavage is inefficient, and many virions are only partially matured. These uncleaved prM would play a role in immune evasion. May play a role in virus budding. Exerts cytotoxic effects by activating a mitochondrial apoptotic pathway through M ectodomain. May display a viroporin activity. Its function is as follows. Binds to host cell surface receptor and mediates fusion between viral and cellular membranes. Efficient virus attachment to cell is, at least in part, mediated by host HSPA5. Envelope protein is synthesized in the endoplasmic reticulum in the form of heterodimer with protein prM. They play a role in virion budding in the ER, and the newly formed immature particle is covered with 60 spikes composed of heterodimer between precursor prM and envelope protein E. The virion is transported to the Golgi apparatus where the low pH causes dissociation of PrM-E heterodimers and formation of E homodimers. prM-E cleavage is inefficient, and many virions are only partially matured. These uncleaved prM would play a role in immune evasion. In terms of biological role, involved in immune evasion, pathogenesis and viral replication. Once cleaved off the polyprotein, is targeted to three destinations: the viral replication cycle, the plasma membrane and the extracellular compartment. Essential for viral replication. Required for formation of the replication complex and recruitment of other non-structural proteins to the ER-derived membrane structures. Excreted as a hexameric lipoparticle that plays a role against host immune response. Antagonizing the complement function. Binds to the host macrophages and dendritic cells. Inhibits signal transduction originating from Toll-like receptor 3 (TLR3). Functionally, component of the viral RNA replication complex that functions in virion assembly and antagonizes the host alpha/beta interferon antiviral response. Required cofactor for the serine protease function of NS3. May have membrane-destabilizing activity and form viroporins. Its function is as follows. Displays three enzymatic activities: serine protease, NTPase and RNA helicase. NS3 serine protease, in association with NS2B, performs its autocleavage and cleaves the polyprotein at dibasic sites in the cytoplasm: C-prM, NS2A-NS2B, NS2B-NS3, NS3-NS4A, NS4A-2K and NS4B-NS5. NS3 RNA helicase binds RNA and unwinds dsRNA in the 3' to 5' direction. In terms of biological role, regulates the ATPase activity of the NS3 helicase activity. NS4A allows NS3 helicase to conserve energy during unwinding. Functionally, functions as a signal peptide for NS4B and is required for the interferon antagonism activity of the latter. Induces the formation of ER-derived membrane vesicles where the viral replication takes place. Inhibits interferon (IFN)-induced host STAT1 phosphorylation and nuclear translocation, thereby preventing the establishment of cellular antiviral state by blocking the IFN-alpha/beta pathway. Inhibits STAT2 translocation in the nucleus after IFN-alpha treatment. Its function is as follows. Replicates the viral (+) and (-) RNA genome. Performs the capping of genomes in the cytoplasm. NS5 methylates viral RNA cap at guanine N-7 and ribose 2'-O positions. Besides its role in RNA genome replication, also prevents the establishment of cellular antiviral state by blocking the interferon-alpha/beta (IFN-alpha/beta) signaling pathway. Inhibits host TYK2 and STAT2 phosphorylation, thereby preventing activation of JAK-STAT signaling pathway. The protein is Genome polyprotein of Ardeidae (herons).